Consider the following 24-residue polypeptide: Small ribosomal subunit protein uS19c (24 aa).

It belongs to the universal ribosomal protein uS19 family.

It localises to the plastid. Its subcellular location is the chloroplast. In terms of biological role, protein S19 forms a complex with S13 that binds strongly to the 16S ribosomal RNA. This is Small ribosomal subunit protein uS19c (rps19) from Petunia hybrida (Petunia).